The chain runs to 689 residues: MAAPPSTRLQGMLQTAVQSVQWTYSLFWQLCPQQGILVWGDGYYNGAIKTRKTVLPIEVSAEEASLQRSQQLRELYDSLSAGESNQQTRRPCAALSPEDLTESEWFYLMCVSFSFPPGVGLPGKAYAKRQHVWLTGANEVDSKVFSRAILAKSARVQTVVCIPLLDGVVELGNTERVQEDIGFIHQVKSFFIDHHPPPPPKPALSEHSTSNLATSSVHPRFHSPPLPLTYAPLDPPLIANQIHMEEEQEQEQEEDEDDDDDDDDEEEAESDSEAHTGLNSEAQNPRVDHVARAAAEPSELMQLEMSEDIRLGSPDDGSNNMDPDFQLMVASQGGNPADQQQRVDSFRAESTRRWPLLQDPLGRSLQAPTSGGTGLEELTQDDTHYSQTVSTILQHQSNRWLESSSSSAAGCLMYSSQSSFSKWPLRPSDHHHQADATSQCLLKYILFTVPFLHSKYRDDNNSPKSATAADSASRFRKPTPQDELSANHVLAERRRREKLNERFIILRSLVPFVTKMDKASILGDTIEYVKQLRKNIQDLEARARQIEIDQRSRSSGDPQRSGAKAATDKRKLRIVEASGGAKGKAVDSVAVATPPPPAPPQPVAGVGVQVQVSIIESDALVELQCTHREGLLLDVMVVLRDHRVEVTAVQSSLTNGVFVAELRAKVKENVNGKKPSIVEVKRAIHQIIP.

2 disordered regions span residues 192 to 287 (IDHH…NPRV) and 458 to 489 (DDNN…ANHV). Residues 206-217 (EHSTSNLATSSV) are compositionally biased toward polar residues. Residues 246-271 (EEQEQEQEEDEDDDDDDDDEEEAESD) are compositionally biased toward acidic residues. The segment at 483 to 496 (ELSANHVLAERRRR) is basic motif. Positions 483–532 (ELSANHVLAERRRREKLNERFIILRSLVPFVTKMDKASILGDTIEYVKQL) constitute a bHLH domain. A helix-loop-helix motif region spans residues 497–532 (EKLNERFIILRSLVPFVTKMDKASILGDTIEYVKQL). The disordered stretch occupies residues 547 to 570 (EIDQRSRSSGDPQRSGAKAATDKR).

Belongs to the bHLH protein family. Interacts with MYB123. As to expression, expressed in the inner pericarp of maturing fruits.

The protein resides in the nucleus. Its function is as follows. Transcription activator involved in the spatiotemporal regulation of anthocyanin biosynthesis specifically in the inner pericarp of red-fleshed kiwifruits. Functions in association with MYB123 to activate the promoters of LDOX (ANS) and F3GT1 that encode the dedicated enzymes for anthocyanin biosynthesis. The chain is Transcription factor BHLH42 from Actinidia chinensis var. chinensis (Chinese soft-hair kiwi).